The chain runs to 278 residues: Large ribosomal subunit protein uL2 (278 aa).

2 disordered regions span residues 33–57 and 224–278; these read LIRP…KGGG and VVMN…GKKR. A compositionally biased stretch (basic residues) spans 45–57; the sequence is AHGRITTRHKGGG. Residues 253-268 show a composition bias toward basic and acidic residues; sequence PEGRTRKPNKASDKLI. A compositionally biased stretch (basic residues) spans 269–278; sequence VRRRRTGKKR.

Belongs to the universal ribosomal protein uL2 family. In terms of assembly, part of the 50S ribosomal subunit. Forms a bridge to the 30S subunit in the 70S ribosome.

Its function is as follows. One of the primary rRNA binding proteins. Required for association of the 30S and 50S subunits to form the 70S ribosome, for tRNA binding and peptide bond formation. It has been suggested to have peptidyltransferase activity; this is somewhat controversial. Makes several contacts with the 16S rRNA in the 70S ribosome. This chain is Large ribosomal subunit protein uL2, found in Mycobacteroides abscessus (strain ATCC 19977 / DSM 44196 / CCUG 20993 / CIP 104536 / JCM 13569 / NCTC 13031 / TMC 1543 / L948) (Mycobacterium abscessus).